The sequence spans 877 residues: Alanine--tRNA ligase (877 aa).

Residues His-563, His-567, Cys-667, and His-671 each coordinate Zn(2+).

It belongs to the class-II aminoacyl-tRNA synthetase family. Zn(2+) serves as cofactor.

It localises to the cytoplasm. The enzyme catalyses tRNA(Ala) + L-alanine + ATP = L-alanyl-tRNA(Ala) + AMP + diphosphate. Catalyzes the attachment of alanine to tRNA(Ala) in a two-step reaction: alanine is first activated by ATP to form Ala-AMP and then transferred to the acceptor end of tRNA(Ala). Also edits incorrectly charged Ser-tRNA(Ala) and Gly-tRNA(Ala) via its editing domain. This Cytophaga hutchinsonii (strain ATCC 33406 / DSM 1761 / CIP 103989 / NBRC 15051 / NCIMB 9469 / D465) protein is Alanine--tRNA ligase.